The chain runs to 157 residues: NAD(P)H-quinone oxidoreductase subunit N (157 aa).

It belongs to the complex I NdhN subunit family. In terms of assembly, NDH-1 can be composed of about 15 different subunits; different subcomplexes with different compositions have been identified which probably have different functions.

The protein resides in the cellular thylakoid membrane. It catalyses the reaction a plastoquinone + NADH + (n+1) H(+)(in) = a plastoquinol + NAD(+) + n H(+)(out). The enzyme catalyses a plastoquinone + NADPH + (n+1) H(+)(in) = a plastoquinol + NADP(+) + n H(+)(out). Functionally, NDH-1 shuttles electrons from an unknown electron donor, via FMN and iron-sulfur (Fe-S) centers, to quinones in the respiratory and/or the photosynthetic chain. The immediate electron acceptor for the enzyme in this species is believed to be plastoquinone. Couples the redox reaction to proton translocation, and thus conserves the redox energy in a proton gradient. Cyanobacterial NDH-1 also plays a role in inorganic carbon-concentration. This chain is NAD(P)H-quinone oxidoreductase subunit N, found in Picosynechococcus sp. (strain ATCC 27264 / PCC 7002 / PR-6) (Agmenellum quadruplicatum).